The chain runs to 167 residues: Single-stranded DNA-binding protein 2 (167 aa).

An SSB domain is found at 1–104; it reads MLNRVVLVGR…VVCDSVQFLE (104 aa). The disordered stretch occupies residues 107-167; that stretch reads NAQQNGGQRQ…IDISDDDLPF (61 aa). 2 stretches are compositionally biased toward low complexity: residues 109-118 and 132-147; these read QQNGGQRQQN and SGQNNSYNNSSNTKQS. Positions 162 to 167 match the Important for interaction with partner proteins motif; it reads DDDLPF.

Homotetramer.

In terms of biological role, plays an important role in DNA replication, recombination and repair. Binds to ssDNA and to an array of partner proteins to recruit them to their sites of action during DNA metabolism. This Staphylococcus aureus (strain MSSA476) protein is Single-stranded DNA-binding protein 2 (ssb2).